Here is an 837-residue protein sequence, read N- to C-terminus: Minor tail protein Gp26 (837 aa).

The polypeptide is Minor tail protein Gp26 (26) (Mycobacterium phage L5 (Mycobacteriophage L5)).